A 79-amino-acid chain; its full sequence is Small ribosomal subunit protein uS17 (79 aa).

This sequence belongs to the universal ribosomal protein uS17 family. Part of the 30S ribosomal subunit.

Functionally, one of the primary rRNA binding proteins, it binds specifically to the 5'-end of 16S ribosomal RNA. The protein is Small ribosomal subunit protein uS17 of Orientia tsutsugamushi (strain Ikeda) (Rickettsia tsutsugamushi).